The chain runs to 821 residues: Calpain-3 (821 aa).

The tract at residues Met-1–Gly-34 is disordered. Positions Leu-73–Thr-417 constitute a Calpain catalytic domain. Catalysis depends on residues Cys-128, His-334, and Asn-358. The tract at residues Ala-418–Asn-586 is domain III. The segment at Thr-587–Glu-649 is linker. The disordered stretch occupies residues Ile-603–Gln-652. The span at Gly-624 to Lys-638 shows a compositional bias: basic and acidic residues. Residues Pro-641 to Gln-652 show a composition bias toward polar residues. 4 EF-hand domains span residues Glu-649–Lys-683, Phe-692–Lys-725, Lys-722–His-757, and Val-787–Ala-821. A domain IV region spans residues Glu-650–Ala-821. Residues Ala-662, Asp-665, Glu-667, Glu-672, Asp-705, Asp-707, Ser-709, Arg-711, Glu-716, Asp-735, Asp-737, Ser-739, Thr-741, Glu-746, Asp-800, Asp-802, Asp-804, and Ile-806 each coordinate Ca(2+).

It belongs to the peptidase C2 family. Homodimer; via EF-hand domain 4. Interacts with TTN/titin. Interacts with CMYA5; this interaction, which results in CMYA5 proteolysis, may protect CAPN3 from autolysis. Interacts with SIMC1. Interacts with UTP25; the interaction is required for CAPN3 translocation to the nucleolus. As to expression, skeletal muscle.

Its subcellular location is the cytoplasm. It is found in the nucleus. It localises to the nucleolus. The catalysed reaction is Broad endopeptidase activity.. With respect to regulation, activated by micromolar concentrations of calcium and inhibited by calpastatin. Calcium-regulated non-lysosomal thiol-protease. Proteolytically cleaves CTBP1. Mediates, with UTP25, the proteasome-independent degradation of p53/TP53. The chain is Calpain-3 (CAPN3) from Sus scrofa (Pig).